We begin with the raw amino-acid sequence, 210 residues long: MNDSLLSNGHAPPLRQATVDRQTKETKVHVELTLDGNGLADNHTGIPFLNHMLDQLCAHGLVDLRVQASGDTHIDDHHTNEDVGITLGMALDQALGDRRGIQRFGHFVAPLDESLVEVALDFSGRPHLNYGLQIPTQRVGTYDTQLVREFFVALVNHSRMTLHIRQLDGMNSHHIIEATFKAFARALRMAIALDPRRAQQIPSSKGVIQA.

Residues 1–23 (MNDSLLSNGHAPPLRQATVDRQT) form a disordered region.

This sequence belongs to the imidazoleglycerol-phosphate dehydratase family.

It localises to the cytoplasm. The catalysed reaction is D-erythro-1-(imidazol-4-yl)glycerol 3-phosphate = 3-(imidazol-4-yl)-2-oxopropyl phosphate + H2O. The protein operates within amino-acid biosynthesis; L-histidine biosynthesis; L-histidine from 5-phospho-alpha-D-ribose 1-diphosphate: step 6/9. The polypeptide is Imidazoleglycerol-phosphate dehydratase (Thermosynechococcus vestitus (strain NIES-2133 / IAM M-273 / BP-1)).